The sequence spans 151 residues: Methylglyoxal synthase (151 aa).

Residues 6-151 (RTMPAHKHVA…DYDAYLAERT (146 aa)) form the MGS-like domain. Substrate-binding positions include His19, Lys23, 45–48 (TGTT), and 65–66 (SG). The active-site Proton donor/acceptor is Asp71. His98 contributes to the substrate binding site.

The protein belongs to the methylglyoxal synthase family.

It catalyses the reaction dihydroxyacetone phosphate = methylglyoxal + phosphate. Catalyzes the formation of methylglyoxal from dihydroxyacetone phosphate. The chain is Methylglyoxal synthase from Vibrio campbellii (strain ATCC BAA-1116).